Consider the following 665-residue polypeptide: Succinate dehydrogenase [ubiquinone] flavoprotein subunit B, mitochondrial (665 aa).

The N-terminal 45 residues, 1–45, are a transit peptide targeting the mitochondrion; sequence MALLKVAPSRLLSRALQLTSTLQNCTATSIAARRNFHFTVYGRKD. Residues A72, A75, T94, K95, and S101 each coordinate FAD. H102 carries the post-translational modification Tele-8alpha-FAD histidine. Residues T103, G108, A224, and D278 each coordinate FAD. Residues H299, R343, and H410 each contribute to the oxaloacetate site. R343 serves as the catalytic Proton acceptor. E443 lines the FAD pocket. The oxaloacetate site is built by R454 and A457. 2 residues coordinate FAD: S459 and L460.

This sequence belongs to the FAD-dependent oxidoreductase 2 family. FRD/SDH subfamily. Component of complex II composed of four subunits: a flavoprotein (FP), an iron-sulfur protein (IP), and a cytochrome b composed of a large and a small subunit. The cofactor is FAD.

The protein resides in the mitochondrion inner membrane. The catalysed reaction is a ubiquinone + succinate = a ubiquinol + fumarate. The enzyme catalyses (R)-malate + a quinone = enol-oxaloacetate + a quinol. It carries out the reaction (S)-malate + a quinone = enol-oxaloacetate + a quinol. Its pathway is carbohydrate metabolism; tricarboxylic acid cycle; fumarate from succinate (eukaryal route): step 1/1. Its activity is regulated as follows. Enol-oxaloacetate inhibits the succinate dehydrogenase activity. In terms of biological role, flavoprotein (FP) subunit of succinate dehydrogenase (SDH) that is involved in complex II of the mitochondrial electron transport chain and is responsible for transferring electrons from succinate to ubiquinone (coenzyme Q). SDH also oxidizes malate to the non-canonical enol form of oxaloacetate, enol-oxaloacetate. Enol-oxaloacetate, which is a potent inhibitor of the succinate dehydrogenase activity, is further isomerized into keto-oxaloacetate. The polypeptide is Succinate dehydrogenase [ubiquinone] flavoprotein subunit B, mitochondrial (sdha-b) (Xenopus laevis (African clawed frog)).